We begin with the raw amino-acid sequence, 197 residues long: Dephospho-CoA kinase (197 aa).

In terms of domain architecture, DPCK spans 2–197; sequence IIGLTGGIAS…GAIKDLANLV (196 aa). 10–15 is a binding site for ATP; the sequence is ASGKST.

The protein belongs to the CoaE family.

The protein resides in the cytoplasm. It carries out the reaction 3'-dephospho-CoA + ATP = ADP + CoA + H(+). It participates in cofactor biosynthesis; coenzyme A biosynthesis; CoA from (R)-pantothenate: step 5/5. Functionally, catalyzes the phosphorylation of the 3'-hydroxyl group of dephosphocoenzyme A to form coenzyme A. The polypeptide is Dephospho-CoA kinase (Streptococcus thermophilus (strain ATCC BAA-250 / LMG 18311)).